The sequence spans 902 residues: MNLLTKILRMGEGRKLKALQRTVEEVSAREPEVRGLSDAALRARTDEFKERLQGGETLDDLLPEAFAVVREVARRTLGLRPFDVQVMGGVVLHQGKIAEMKTGEGKTLVATMPVYLNALAGRGVHVVTVNDYLARRDAEWMGPIYEFLGLEVGVIQESMGFEERKKAYAADITYGTNAQFGFDYLRDNIATSPDQLVQRELHYAIVDEVDSILIDEARTPLIISGLPESAADLYYRFAAIVPRLREGEDYEVDEKKRQVAPTEQGVAKVEKALGIPNLYDGVNTNLVNHLIQALRAHTLFRRDREYIVRDGQVFIVDEFTGRVLEGRRYSEGLHQAIEAKEGVEIKEENQTVATITIQNYFRQYEKLAGMTGTAATEADEFMHTYKMEVVSIPTHRPMIRVDRDDLVYRTKKAKYAAVIDDIVERHRKGQPVLVGTVSVEVSEHLSALLKRRGIKHNVLNAKHHEREAEIIAEAGKKGAVTIATNMAGRGTDIKLGGSDESGGGEEWTEEHERLASEIMEKYPTITRDMLEGRSLESLEVVNLGGLYVLGTERHEARRIDNQLRGRSGRQGDPGESRFYLSFEDDLLRLFGGQRMQSLMERIGLEEDEAIEAGMVSNSVRRAQEQVESRNFQMRKRILEYDDVLNKQREVIYAIRREILMGEKVDTMSYVEDVLTDVISRYASEDVYPEEWDLEGLATELNRFYPCQVDFSSLDIESATADQVREMVLEDARERLEERRAEWEERTAELERRGLARADGLDSFEEAERRTLLSVVDSRWREHLYEMEYLREGIGWRGLGQRDPLVEYKREGYDLFVEMERGIREDYVTYIYRIENLKLSETDVERLSYSGGGEEPNQRPKSPRRRSERKIGPNEPCPCGSGKKFKKCHGRVGAPPLPTSQSQ.

Residues Gln85, 103–107 (GEGKT), and Asp492 contribute to the ATP site. A disordered region spans residues 846 to 902 (LSYSGGGEEPNQRPKSPRRRSERKIGPNEPCPCGSGKKFKKCHGRVGAPPLPTSQSQ). Cys876, Cys878, Cys887, and His888 together coordinate Zn(2+).

Belongs to the SecA family. Monomer and homodimer. Part of the essential Sec protein translocation apparatus which comprises SecA, SecYEG and auxiliary proteins SecDF. Other proteins may also be involved. Requires Zn(2+) as cofactor.

The protein resides in the cell membrane. Its subcellular location is the cytoplasm. The enzyme catalyses ATP + H2O + cellular proteinSide 1 = ADP + phosphate + cellular proteinSide 2.. Part of the Sec protein translocase complex. Interacts with the SecYEG preprotein conducting channel. Has a central role in coupling the hydrolysis of ATP to the transfer of proteins into and across the cell membrane, serving as an ATP-driven molecular motor driving the stepwise translocation of polypeptide chains across the membrane. The polypeptide is Protein translocase subunit SecA (Rubrobacter xylanophilus (strain DSM 9941 / JCM 11954 / NBRC 16129 / PRD-1)).